Here is a 672-residue protein sequence, read N- to C-terminus: tRNA(Met) cytidine acetyltransferase TmcA (672 aa).

ATP-binding positions include Q180, 202-211, and R319; that span reads GRGKSALAGQ. The region spanning 349 to 531 is the N-acetyltransferase domain; the sequence is IEISAFYQQA…SGCYTAMALL (183 aa). Acetyl-CoA-binding positions include 461-463, 468-474, and R506; these read IAV and QREGIGQ.

This sequence belongs to the RNA cytidine acetyltransferase family. TmcA subfamily.

The protein resides in the cytoplasm. The enzyme catalyses cytidine(34) in elongator tRNA(Met) + acetyl-CoA + ATP + H2O = N(4)-acetylcytidine(34) in elongator tRNA(Met) + ADP + phosphate + CoA + H(+). Functionally, catalyzes the formation of N(4)-acetylcytidine (ac(4)C) at the wobble position of tRNA(Met), by using acetyl-CoA as an acetyl donor and ATP (or GTP). This Salmonella typhimurium (strain LT2 / SGSC1412 / ATCC 700720) protein is tRNA(Met) cytidine acetyltransferase TmcA.